We begin with the raw amino-acid sequence, 193 residues long: Ganglioside GM2 activator (193 aa).

The N-terminal stretch at 1–20 is a signal peptide; that stretch reads MHRLPLLLLLGLLLAGSVAP. 4 cysteine pairs are disulfide-bonded: Cys-39–Cys-183, Cys-99–Cys-106, Cys-112–Cys-138, and Cys-125–Cys-136. A glycan (N-linked (GlcNAc...) asparagine) is linked at Asn-151.

As to expression, widely expressed. Most abundant in kidney and testis.

It is found in the lysosome. The enzyme catalyses cholesterol(in) = cholesterol(out). Functionally, binds gangliosides and stimulates ganglioside GM2 degradation. It stimulates only the breakdown of ganglioside GM2 and glycolipid GA2 by beta-hexosaminidase A. It extracts single GM2 molecules from membranes and presents them in soluble form to beta-hexosaminidase A for cleavage of N-acetyl-D-galactosamine and conversion to GM3. The large binding pocket can accommodate several single chain phospholipids and fatty acids, GM2A also exhibits some calcium-independent phospholipase activity. Has cholesterol transfer activity. This is Ganglioside GM2 activator from Mus musculus (Mouse).